An 874-amino-acid chain; its full sequence is Translation initiation factor IF-2 (874 aa).

The tract at residues 1–262 (MEDKNKTIKE…EKSTSDRDFS (262 aa)) is disordered. Residues 54-63 (SKPPVMPLPL) show a composition bias toward pro residues. A compositionally biased stretch (basic and acidic residues) spans 83-104 (AKREESPGKQDAGRPPRDKDTR). Positions 141 to 222 (SGGGYQGNRG…NRGPRSGGTG (82 aa)) are enriched in gly residues. Residues 235-244 (LSQSRGSSVT) are compositionally biased toward polar residues. Residues 250–262 (HDKEKSTSDRDFS) are compositionally biased toward basic and acidic residues. The tr-type G domain maps to 369–538 (NRPPVVTIMG…LLQAEVMDLK (170 aa)). The interval 378–385 (GHVDHGKT) is G1. GTP is bound at residue 378–385 (GHVDHGKT). Positions 403–407 (GITQH) are G2. Positions 424-427 (DTPG) are G3. Residues 424–428 (DTPGH) and 478–481 (NKID) each bind GTP. Residues 478 to 481 (NKID) are G4. The interval 514-516 (SAR) is G5.

This sequence belongs to the TRAFAC class translation factor GTPase superfamily. Classic translation factor GTPase family. IF-2 subfamily.

The protein localises to the cytoplasm. Its function is as follows. One of the essential components for the initiation of protein synthesis. Protects formylmethionyl-tRNA from spontaneous hydrolysis and promotes its binding to the 30S ribosomal subunits. Also involved in the hydrolysis of GTP during the formation of the 70S ribosomal complex. This Leptospira interrogans serogroup Icterohaemorrhagiae serovar copenhageni (strain Fiocruz L1-130) protein is Translation initiation factor IF-2.